The following is a 360-amino-acid chain: Phosphoserine aminotransferase (360 aa).

L-glutamate is bound at residue R41. Pyridoxal 5'-phosphate is bound by residues 75–76 (AS), W99, T152, D171, and Q194. At K195 the chain carries N6-(pyridoxal phosphate)lysine. 236–237 (NT) provides a ligand contact to pyridoxal 5'-phosphate.

It belongs to the class-V pyridoxal-phosphate-dependent aminotransferase family. SerC subfamily. In terms of assembly, homodimer. It depends on pyridoxal 5'-phosphate as a cofactor.

The protein resides in the cytoplasm. It catalyses the reaction O-phospho-L-serine + 2-oxoglutarate = 3-phosphooxypyruvate + L-glutamate. It carries out the reaction 4-(phosphooxy)-L-threonine + 2-oxoglutarate = (R)-3-hydroxy-2-oxo-4-phosphooxybutanoate + L-glutamate. Its pathway is amino-acid biosynthesis; L-serine biosynthesis; L-serine from 3-phospho-D-glycerate: step 2/3. It functions in the pathway cofactor biosynthesis; pyridoxine 5'-phosphate biosynthesis; pyridoxine 5'-phosphate from D-erythrose 4-phosphate: step 3/5. Functionally, catalyzes the reversible conversion of 3-phosphohydroxypyruvate to phosphoserine and of 3-hydroxy-2-oxo-4-phosphonooxybutanoate to phosphohydroxythreonine. This chain is Phosphoserine aminotransferase, found in Porphyromonas gingivalis (strain ATCC 33277 / DSM 20709 / CIP 103683 / JCM 12257 / NCTC 11834 / 2561).